The chain runs to 215 residues: Small ribosomal subunit protein uS7 (215 aa).

The protein belongs to the universal ribosomal protein uS7 family. As to quaternary structure, part of the 30S ribosomal subunit.

Functionally, one of the primary rRNA binding proteins, it binds directly to 16S rRNA where it nucleates assembly of the head domain of the 30S subunit. Is located at the subunit interface close to the decoding center. The polypeptide is Small ribosomal subunit protein uS7 (Thermococcus gammatolerans (strain DSM 15229 / JCM 11827 / EJ3)).